The sequence spans 280 residues: Aspartate/glutamate leucyltransferase (280 aa).

The protein belongs to the R-transferase family. Bpt subfamily.

It is found in the cytoplasm. It carries out the reaction N-terminal L-glutamyl-[protein] + L-leucyl-tRNA(Leu) = N-terminal L-leucyl-L-glutamyl-[protein] + tRNA(Leu) + H(+). It catalyses the reaction N-terminal L-aspartyl-[protein] + L-leucyl-tRNA(Leu) = N-terminal L-leucyl-L-aspartyl-[protein] + tRNA(Leu) + H(+). In terms of biological role, functions in the N-end rule pathway of protein degradation where it conjugates Leu from its aminoacyl-tRNA to the N-termini of proteins containing an N-terminal aspartate or glutamate. The polypeptide is Aspartate/glutamate leucyltransferase (Cereibacter sphaeroides (strain ATCC 17023 / DSM 158 / JCM 6121 / CCUG 31486 / LMG 2827 / NBRC 12203 / NCIMB 8253 / ATH 2.4.1.) (Rhodobacter sphaeroides)).